The primary structure comprises 359 residues: MASRSFFGALWKSEASRIPPVNLPSVELAVQSNHYCHAQKDSGSHPNSEKQRARRKLYVASAICLVFMIGEIIGGYLAQSLAIMTDAAHLLTDFASMLISLFSLWVSSRPATKTMNFGWQRAEILGALLSVLSIWVVTGVLVYLAVQRLISGDYEIKGDTMLITSGCAVAVNIIMGLALHQSGHGHSHGHSHEDSSQQQQNPSVRAAFIHVVGDLLQSVGVLVAAYIIYFKPEYKYVDPICTFLFSILVLGTTLTILRDVILVLMEGTPKGVDFTTVKNLLLSVDGVEALHSLHIWALTVAQPVLSVHIAIAQNVDAQAVLKVARDRLQGKFNFHTMTIQIESYSEDMKSCQECQGPSE.

Residues 1-56 are Cytoplasmic-facing; the sequence is MASRSFFGALWKSEASRIPPVNLPSVELAVQSNHYCHAQKDSGSHPNSEKQRARRK. The Mitochondrial localization signal signature appears at 34 to 37; that stretch reads HYCH. C36 is a Zn(2+) binding site. Residues 57 to 77 form a helical membrane-spanning segment; it reads LYVASAICLVFMIGEIIGGYL. The Lumenal portion of the chain corresponds to 78–86; the sequence is AQSLAIMTD. A helical membrane pass occupies residues 87–107; it reads AAHLLTDFASMLISLFSLWVS. The Zn(2+) site is built by H89 and D93. Topologically, residues 108-123 are cytoplasmic; sequence SRPATKTMNFGWQRAE. A helical membrane pass occupies residues 124-144; that stretch reads ILGALLSVLSIWVVTGVLVYL. Residues 145 to 159 lie on the Lumenal side of the membrane; that stretch reads AVQRLISGDYEIKGD. A helical membrane pass occupies residues 160–180; the sequence is TMLITSGCAVAVNIIMGLALH. At 181–207 the chain is on the cytoplasmic side; that stretch reads QSGHGHSHGHSHEDSSQQQQNPSVRAA. The chain crosses the membrane as a helical span at residues 208–228; the sequence is FIHVVGDLLQSVGVLVAAYII. Residues H210 and D214 each coordinate Zn(2+). Over 229–236 the chain is Lumenal; it reads YFKPEYKY. The chain crosses the membrane as a helical span at residues 237–257; it reads VDPICTFLFSILVLGTTLTIL. Residues 258-291 lie on the Cytoplasmic side of the membrane; the sequence is RDVILVLMEGTPKGVDFTTVKNLLLSVDGVEALH. A Lysosomal targeting motif motif is present at residues 281 to 282; sequence LL. A Phosphoserine modification is found at S283. Residues H291, H308, and E342 each contribute to the Zn(2+) site. Residues 292 to 312 traverse the membrane as a helical segment; that stretch reads SLHIWALTVAQPVLSVHIAIA. Over 313–359 the chain is Lumenal; the sequence is QNVDAQAVLKVARDRLQGKFNFHTMTIQIESYSEDMKSCQECQGPSE.

This sequence belongs to the cation diffusion facilitator (CDF) transporter (TC 2.A.4) family. SLC30A subfamily. As to quaternary structure, homodimer. Interacts (via lysosomal targeting motif) with AP3D1; in AP-3-mediated transport to lysosomes. Interacts with TMEM163. Phosphorylated at Ser-283. Phosphorylation at Ser-283 prevents localization to lysosomes. Dephosphorylation of Ser-283 which triggers localization to lysosomes, accumulation of zinc into lysosomes and lysosomal-mediated cell death is induced by TNF-alpha. As to expression, detected in intestine, kidney, seminal vesicles and testis.

It is found in the cytoplasmic vesicle. The protein localises to the secretory vesicle membrane. Its subcellular location is the zymogen granule membrane. It localises to the endosome membrane. The protein resides in the lysosome membrane. It is found in the mitochondrion inner membrane. It catalyses the reaction Zn(2+)(in) + 2 H(+)(out) = Zn(2+)(out) + 2 H(+)(in). Electroneutral proton-coupled antiporter concentrating zinc ions into a variety of intracellular organelles including endosomes, zymogen granules and mitochondria. Thereby, plays a crucial role in cellular zinc homeostasis to confer upon cells protection against its potential cytotoxicity. Regulates the zinc concentration of milk, through the transport of zinc ions into secretory vesicles of mammary cells. By concentrating zinc ions into lysosomes participates to lysosomal-mediated cell death during early mammary gland involution. This Rattus norvegicus (Rat) protein is Proton-coupled zinc antiporter SLC30A2.